The sequence spans 138 residues: Mu-like prophage FluMu G protein 2 (138 aa).

This sequence to phage Mu protein G.

This Haemophilus influenzae (strain ATCC 51907 / DSM 11121 / KW20 / Rd) protein is Mu-like prophage FluMu G protein 2.